Consider the following 148-residue polypeptide: Ribonuclease H (148 aa).

An RNase H type-1 domain is found at 1-141 (MKTVEIYTDG…ADELANLGVK (141 aa)). Positions 9, 47, 69, and 133 each coordinate Mg(2+).

Belongs to the RNase H family. In terms of assembly, monomer. It depends on Mg(2+) as a cofactor.

It is found in the cytoplasm. The enzyme catalyses Endonucleolytic cleavage to 5'-phosphomonoester.. Its function is as follows. Endonuclease that specifically degrades the RNA of RNA-DNA hybrids. The polypeptide is Ribonuclease H (Hahella chejuensis (strain KCTC 2396)).